The primary structure comprises 163 residues: Cyclic pyranopterin monophosphate synthase (163 aa).

Residues Met74 to His76 and Met111 to Glu112 contribute to the substrate site. Residue Asp126 is part of the active site.

Belongs to the MoaC family. As to quaternary structure, homohexamer; trimer of dimers.

It carries out the reaction (8S)-3',8-cyclo-7,8-dihydroguanosine 5'-triphosphate = cyclic pyranopterin phosphate + diphosphate. The protein operates within cofactor biosynthesis; molybdopterin biosynthesis. Its function is as follows. Catalyzes the conversion of (8S)-3',8-cyclo-7,8-dihydroguanosine 5'-triphosphate to cyclic pyranopterin monophosphate (cPMP). The polypeptide is Cyclic pyranopterin monophosphate synthase (Desulfitobacterium hafniense (strain DSM 10664 / DCB-2)).